We begin with the raw amino-acid sequence, 82 residues long: RNA-binding protein BPUM_0095 (82 aa).

The protein belongs to the eukaryotic ribosomal protein eL8 family.

This is RNA-binding protein BPUM_0095 from Bacillus pumilus (strain SAFR-032).